Reading from the N-terminus, the 1030-residue chain is Protein KRBA1 (1030 aa).

Disordered stretches follow at residues 27-56, 80-208, 225-255, 281-505, and 634-788; these read EPGRAVGGGSHADEGQEPAGCGDPQGGQPR, KGAM…NSPL, HPETSPSFLPPLPSLGTSRLTRADLGPGSPP, EAQD…GLEN, and GGPS…PASS. S101 bears the Phosphoserine mark. Over residues 102 to 114 the composition is skewed to low complexity; sequence PEAAAAREPCPLR. Over residues 124-143 the composition is skewed to polar residues; sequence PTSQPHLATTPTDSSCSSGP. Basic and acidic residues predominate over residues 157-168; sequence TADKPWPTRKEG. Phosphoserine is present on residues S177, S182, S184, S229, S253, and S355. Positions 372 to 389 are enriched in low complexity; sequence PEAQAASASSSPLEALEA. Polar residues predominate over residues 397 to 418; the sequence is NGSSPSQLPPTSCSQNPQPGDS. A compositionally biased stretch (basic and acidic residues) spans 419-437; it reads RSQKPELQPHRSHSEEATR. Low complexity-rich tracts occupy residues 485 to 502 and 642 to 651; these read QGQHPGKGSPPGSSPLQG and PGSSSSFSGS. The segment covering 654–674 has biased composition (basic and acidic residues); it reads EDPRPEPDLWKPLPQERDRLP. Positions 689–698 are enriched in gly residues; sequence TPAGSSGGSP. Over residues 760–784 the composition is skewed to pro residues; sequence QGPPELPSESPPPELPPPEAAPPVL. Residues 799-832 adopt a coiled-coil conformation; that stretch reads LQQELHSLGAALAEKLDRLATALAGLAQEVATMR. A compositionally biased stretch (basic residues) spans 870 to 887; it reads RHLPYWRQKGPTRPKPKI. The interval 870 to 1030 is disordered; that stretch reads RHLPYWRQKG…EHRDPRWGAH (161 aa). A compositionally biased stretch (pro residues) spans 913–923; it reads PLPPDAPPAEP. 2 stretches are compositionally biased toward low complexity: residues 929 to 953 and 966 to 984; these read SSSQQLLSSTPSCHAAPPAHPLLAH and PAALPLQGASPPAASADAD. Residues 1019–1030 show a composition bias toward basic and acidic residues; it reads GGEHRDPRWGAH.

As to expression, expressed in brain (cerebellum).

The protein is Protein KRBA1 (KRBA1) of Homo sapiens (Human).